Consider the following 1538-residue polypeptide: MMRTAFSRISGMTAQQRTSLADEFDRVSRIAVAEPVAVVGIGCRFPGDVDGPESFWDFLVAGRNAISTVPADRWDAEAFYHPDPLTPGRMTTKWGGFVPDVAGFDAEFFGITPREAAAMDPQQRMLLEVAWEALEHAGIPPDSLGGTRTAVMMGVYFNEYQSMLAASPQNVDAYSGTGNAHSITVGRISYLLGLRGPAVAVDTACSSSLVAVHLACQSLRLRETDLALAGGVSITLRPETQIAISAWGLLSPQGRCAAFDAAADGFVRGEGAGVVVLKRLTDAVRDGDQVLAVVRGSAVNQDGRSNGVTAPNTAAQCDVIADALRSGDVAPDSVNYVEAHGTGTVLGDPIEFEALAATYGHGGDACALGAVKTNIGHLEAAAGIAGFIKATLAVQRATIPPNLHFSQWNPAIDAASTRFFVPTQNSPWPTAEGPRRAAVSSFGLGGTNAHVIIEQGSELAPVSEGGEDTGVSTLVVTGKTAQRMAATAQVLADWMEGPGAEVAVADVAHTVNHHRARQATFGTVVARDRAQAIAGLRALAAGQHAPGVVSHQDGSPGPGTVFVYSGRGSQWAGMGRQLLADEPAFAAAVAELEPVFVEQAGFSLRDVIATGKELVGIEQIQLGLIGMQLTLTELWRSYGVQPDLVIGHSMGEVAAAVVAGALTPAEGLRVTATRARLMAPLSGQGGMALLGLDAAATEALIADYPQVTVGIYNSPRQTVIAGPTEQIDELIARVRAQNRFASRVNIEVAPHNPAMDALQPAMRSELADLTPRTPTIGIISTTYADLHTQPIFDAEHWATNMRNPVRFQQAIASAGSGADGAYHTFIEISAHPLLTQAIADTLEDAHRPTKSAAKYLSIGTLQRDADDTVTFRTNLYTADIAHPPHTCHPPEPHPTIPTTPWQHTHHWIATTHPSTAAPEDPGSNKVVVNGQSTSESRALEDWCHQLAWPIRPAVSADPPSTAAWLVVADNELCHELARAADSRVDSLSPPALAAGSDPAALLDALRGVDNVLYAPPVPGELLDIESAYQVFHATRRLAAAMVASSATAISPPKLFIMTRNAQPISEGDRANPGHAVLWGLGRSLALEHPEIWGGIIDLDDSMPAELAVRHVLTAAHGTDGEDQVVYRSGARHVPRLQRRTLPGKPVTLNADASQLVIGATGNIGPHLIRQLARMGAKTIVAMARKPGALDELTQCLAATGTDLIAVAADATDPAAMQTLFDRFGTELPPLEGIYLAAFAGRPALLSEMTDDDVTTMFRPKLDALALLHRRSLKSPVRHFVLFSSVSGLLGSRWLAHYTATSAFLDSFAGARRTMGLPATVVDWGLWKSLADVQKDATQISAESGLQPMADEVAIGALPLVMNPDAAVATVVVAADWPLLAAAYRTRGALRIVDDLLPAPEDVGKGESEFRTSLRSCPAEKRRDMLFDHVGALAATVMGMPPTEPLDPSAGFFQLGMDSLMSVTLQRALSESLGEFLPASVVFDYPTVYSLTDYLATVLPELLEIGATAVATQQATDSYHELTEAELLEQLSERLRGTQ.

The region spanning 33–455 (AEPVAVVGIG…GTNAHVIIEQ (423 aa)) is the Ketosynthase family 3 (KS3) domain. Active-site for beta-ketoacyl synthase activity residues include Cys205, His340, and His377. The segment at 553-882 (DGSPGPGTVF…TNLYTADIAH (330 aa)) is acyltransferase. Catalysis depends on Ser649, which acts as the For malonyltransferase activity. Residue 1153-1196 (SQLVIGATGNIGPHLIRQLARMGAKTIVAMARKPGALDELTQCL) coordinates NADP(+). The segment at 1153–1328 (SQLVIGATGN…TVVDWGLWKS (176 aa)) is beta-ketoacyl reductase. The Carrier domain occupies 1423–1498 (DMLFDHVGAL…SLTDYLATVL (76 aa)). Ser1458 carries the O-(pantetheine 4'-phosphoryl)serine modification.

It depends on NADP(+) as a cofactor. Pantetheine 4'-phosphate serves as cofactor.

The catalysed reaction is icosanoyl-[(phenol)carboxyphthiodiolenone synthase] + 2 (S)-methylmalonyl-CoA + 3 malonyl-CoA + 5 NADPH + 10 H(+) = C32-carboxyphthiodiolenone-[(phenol)carboxyphthiodiolenone synthase] + 5 CO2 + 5 NADP(+) + 5 CoA + 2 H2O. It carries out the reaction docosanoyl-[(phenol)carboxyphthiodiolenone synthase] + 2 (S)-methylmalonyl-CoA + 3 malonyl-CoA + 5 NADPH + 10 H(+) = C34-carboxyphthiodiolenone-[(phenol)carboxyphthiodiolenone synthase] + 5 CO2 + 5 NADP(+) + 5 CoA + 2 H2O. The enzyme catalyses 17-(4-hydroxyphenyl)heptadecanoyl-[(phenol)carboxyphthiodiolenone synthase] + 2 (S)-methylmalonyl-CoA + 3 malonyl-CoA + 5 NADPH + 10 H(+) = C35-(phenol)carboxyphthiodiolenone-[(phenol)carboxyphthiodiolenone synthase] + 5 CO2 + 5 NADP(+) + 5 CoA + 2 H2O. It catalyses the reaction 19-(4-hydroxyphenyl)nonadecanoyl-[(phenol)carboxyphthiodiolenone synthase] + 2 (S)-methylmalonyl-CoA + 3 malonyl-CoA + 5 NADPH + 10 H(+) = C37-(phenol)carboxyphthiodiolenone-[(phenol)carboxyphthiodiolenone synthase] + 5 CO2 + 5 NADP(+) + 5 CoA + 2 H2O. It participates in lipid metabolism; fatty acid biosynthesis. Part of the PpsABCDE complex involved in the biosynthesis of the lipid core common to phthiocerols and phenolphthiocerols by successive additions of malonyl-CoA or methylmalonyl-CoA extender units. PpsA can accept as substrate the activated forms of either icosanoyl (C20), docosanoyl (C22) or lignoceroyl (C24) groups from FadD26, or a (4-hydroxyphenyl)-C17 or (4-hydroxyphenyl)-C19 fatty acyl from FadD29. PpsA initiates the biosynthesis and extends its substrate using a malonyl-CoA extender unit. The PpsB and PpsC proteins add the second and third malonyl-CoA extender units. PpsD adds an (R)-methylmalonyl unit and PpsE adds a second (R)-methylmalonyl unit. The incorporation of the methylmalonyl units results in formation of two branched methyl groups in the elongated product. This is Phenolphthiocerol/phthiocerol polyketide synthase subunit B (ppsB) from Mycobacterium tuberculosis (strain CDC 1551 / Oshkosh).